Consider the following 257-residue polypeptide: NAD kinase (257 aa).

D44 functions as the Proton acceptor in the catalytic mechanism. Residues 44-45, R49, 116-117, D146, A154, and 157-162 contribute to the NAD(+) site; these read DG, NE, and TAYNLS.

Belongs to the NAD kinase family. It depends on a divalent metal cation as a cofactor.

Its subcellular location is the cytoplasm. The catalysed reaction is NAD(+) + ATP = ADP + NADP(+) + H(+). In terms of biological role, involved in the regulation of the intracellular balance of NAD and NADP, and is a key enzyme in the biosynthesis of NADP. Catalyzes specifically the phosphorylation on 2'-hydroxyl of the adenosine moiety of NAD to yield NADP. The polypeptide is NAD kinase (Rhizorhabdus wittichii (strain DSM 6014 / CCUG 31198 / JCM 15750 / NBRC 105917 / EY 4224 / RW1) (Sphingomonas wittichii)).